Here is an 84-residue protein sequence, read N- to C-terminus: Neurotoxin BmK-M10 (84 aa).

Residues 1–19 form the signal peptide; that stretch reads MNYLVMISFALLLMKGVES. Residues 21 to 83 enclose the LCN-type CS-alpha/beta domain; that stretch reads RDAYIAKPEN…VPIRVPGKCQ (63 aa). 4 cysteine pairs are disulfide-bonded: C31/C82, C35/C55, C41/C65, and C45/C67. Position 84 (R84) is a propeptide, removed by a carboxypeptidase.

Expressed by the venom gland.

It is found in the secreted. In terms of biological role, binds to voltage-dependent sodium channels (Nav) and voltage-dependent delayed rectifier potassium channels and inhibits the inactivation of the activated channels, thereby blocking neuronal transmission. Administration to mice at a dosage of 0.8 mg/kg produces an analgesic effect. The sequence is that of Neurotoxin BmK-M10 from Olivierus martensii (Manchurian scorpion).